A 223-amino-acid chain; its full sequence is Serine/threonine/tyrosine-interacting protein (223 aa).

Residues 28-176 enclose the Tyrosine-protein phosphatase domain; the sequence is EMQEVLPGLF…LQEYEAIYLA (149 aa). The short motif at 76 to 78 is the Interaction with FBXW7 element; it reads FQQ. Ser-184 and Ser-201 each carry phosphoserine. Residues 199–223 form a disordered region; that stretch reads TGSVKRTHEEDDDFGNMQVATAQNG.

This sequence belongs to the protein-tyrosine phosphatase family. Non-receptor class subfamily. As to quaternary structure, interacts with MAPK1; independently of MAPK1 phosphorylation status. Interacts with CARHSP1/Crhsp-24. Interacts (via FQQ motif) with FBXW7 (via F-box domain); the interaction is direct and prevents FBXW7 interaction with SKP1, a component of the SCF(FBXW7) complex. Widely expressed with highest levels in muscle, testis and brain. In testis, expression starts 13-14 days after birth and is limited to the seminiferous tubule and to round and elongating spermatids. Expression is low in condensing spermatids and pachytene spermatocytes, and absent in spermatogonia, spermatozoa and somatic Sertoli cells.

It is found in the nucleus. It localises to the cytoplasm. The protein localises to the cytosol. Catalytically inactive phosphatase. Acts as a nuclear anchor for MAPK1/MAPK3 (ERK1/ERK2). Modulates cell-fate decisions and cell migration by spatiotemporal regulation of MAPK1/MAPK3 (ERK1/ERK2). By binding to the F-box of FBXW7, prevents the assembly of FBXW7 into the SCF E3 ubiquitin-protein ligase complex, and thereby inhibits degradation of its substrates. Plays a role in spermatogenesis. The sequence is that of Serine/threonine/tyrosine-interacting protein from Mus musculus (Mouse).